A 416-amino-acid polypeptide reads, in one-letter code: Histidine--tRNA ligase (416 aa).

The protein belongs to the class-II aminoacyl-tRNA synthetase family. Homodimer.

Its subcellular location is the cytoplasm. The catalysed reaction is tRNA(His) + L-histidine + ATP = L-histidyl-tRNA(His) + AMP + diphosphate + H(+). The chain is Histidine--tRNA ligase from Dictyoglomus thermophilum (strain ATCC 35947 / DSM 3960 / H-6-12).